The following is a 452-amino-acid chain: Adenylosuccinate synthetase (452 aa).

GTP is bound by residues 40–46 and 68–70; these read GDEGKGK and GHT. The active-site Proton acceptor is D41. D41 and G68 together coordinate Mg(2+). IMP-binding positions include 41–44, 66–69, T158, R172, N250, T265, and R329; these read DEGK and NAGH. H69 acts as the Proton donor in catalysis. 325-331 lines the substrate pocket; the sequence is VTTKRKR. GTP contacts are provided by residues R331, 357 to 359, and 440 to 442; these read KLD and GVG.

The protein belongs to the adenylosuccinate synthetase family. Homodimer. It depends on Mg(2+) as a cofactor.

The protein resides in the cytoplasm. It catalyses the reaction IMP + L-aspartate + GTP = N(6)-(1,2-dicarboxyethyl)-AMP + GDP + phosphate + 2 H(+). It participates in purine metabolism; AMP biosynthesis via de novo pathway; AMP from IMP: step 1/2. Its function is as follows. Plays an important role in the de novo pathway and in the salvage pathway of purine nucleotide biosynthesis. Catalyzes the first committed step in the biosynthesis of AMP from IMP. The protein is Adenylosuccinate synthetase of Drosophila grimshawi (Hawaiian fruit fly).